Consider the following 271-residue polypeptide: 5'-nucleotidase SurE (271 aa).

Residues D14, D15, S46, and N104 each coordinate a divalent metal cation.

Belongs to the SurE nucleotidase family. A divalent metal cation is required as a cofactor.

The protein localises to the cytoplasm. It catalyses the reaction a ribonucleoside 5'-phosphate + H2O = a ribonucleoside + phosphate. Nucleotidase that shows phosphatase activity on nucleoside 5'-monophosphates. The sequence is that of 5'-nucleotidase SurE from Gloeothece citriformis (strain PCC 7424) (Cyanothece sp. (strain PCC 7424)).